Consider the following 70-residue polypeptide: Exodeoxyribonuclease 7 small subunit (70 aa).

Belongs to the XseB family. Heterooligomer composed of large and small subunits.

It is found in the cytoplasm. The enzyme catalyses Exonucleolytic cleavage in either 5'- to 3'- or 3'- to 5'-direction to yield nucleoside 5'-phosphates.. Functionally, bidirectionally degrades single-stranded DNA into large acid-insoluble oligonucleotides, which are then degraded further into small acid-soluble oligonucleotides. In Magnetococcus marinus (strain ATCC BAA-1437 / JCM 17883 / MC-1), this protein is Exodeoxyribonuclease 7 small subunit.